The following is a 461-amino-acid chain: Anthranilate synthase component 1 (461 aa).

L-tryptophan-binding positions include Ser-43 and 238–240; that span reads PYM. Chorismate is bound at residue 273-274; that stretch reads GT. Residue Glu-300 participates in Mg(2+) binding. Residues Tyr-388, Arg-408, 422–424, and Gly-424 each bind chorismate; that span reads GAG. Residue Glu-437 coordinates Mg(2+).

This sequence belongs to the anthranilate synthase component I family. As to quaternary structure, heterotetramer consisting of two non-identical subunits: a beta subunit (TrpG) and a large alpha subunit (TrpE). Mg(2+) serves as cofactor.

The catalysed reaction is chorismate + L-glutamine = anthranilate + pyruvate + L-glutamate + H(+). Its pathway is amino-acid biosynthesis; L-tryptophan biosynthesis; L-tryptophan from chorismate: step 1/5. Its activity is regulated as follows. Feedback inhibited by tryptophan. Functionally, part of a heterotetrameric complex that catalyzes the two-step biosynthesis of anthranilate, an intermediate in the biosynthesis of L-tryptophan. In the first step, the glutamine-binding beta subunit (TrpG) of anthranilate synthase (AS) provides the glutamine amidotransferase activity which generates ammonia as a substrate that, along with chorismate, is used in the second step, catalyzed by the large alpha subunit of AS (TrpE) to produce anthranilate. In the absence of TrpG, TrpE can synthesize anthranilate directly from chorismate and high concentrations of ammonia. This is Anthranilate synthase component 1 (trpE) from Methanothermobacter marburgensis (strain ATCC BAA-927 / DSM 2133 / JCM 14651 / NBRC 100331 / OCM 82 / Marburg) (Methanobacterium thermoautotrophicum).